A 189-amino-acid polypeptide reads, in one-letter code: UPF0301 protein RAF_ORF0041 (189 aa).

Belongs to the UPF0301 (AlgH) family.

In Rickettsia africae (strain ESF-5), this protein is UPF0301 protein RAF_ORF0041.